Consider the following 246-residue polypeptide: Dolichol-phosphate mannosyltransferase subunit 1 (246 aa).

Residues Pro-20, Tyr-22, Glu-24, Val-49, Asp-51, Asp-104, Ala-105, Asp-106, Arg-133, Arg-220, and Lys-226 each contribute to the GDP-alpha-D-mannose site. Asp-106 serves as a coordination point for Mg(2+). Residue Asp-106 participates in Mn(2+) binding.

The protein belongs to the glycosyltransferase 2 family. As to quaternary structure, component of the dolichol-phosphate mannose (DPM) synthase complex composed of DPMS1, DPMS2 and DPMS3; in the complex interacts directly with DPMS3. Mg(2+) is required as a cofactor. The cofactor is Mn(2+). Requires Ca(2+) as cofactor.

It localises to the endoplasmic reticulum membrane. It catalyses the reaction a di-trans,poly-cis-dolichyl phosphate + GDP-alpha-D-mannose = a di-trans,poly-cis-dolichyl beta-D-mannosyl phosphate + GDP. It participates in protein modification; protein glycosylation. Transfers mannose from GDP-mannose to dolichol monophosphate to form dolichol phosphate mannose (Dol-P-Man) which is the mannosyl donor in pathways leading to N-glycosylation, glycosyl phosphatidylinositol membrane anchoring, and O-mannosylation of proteins; catalytic subunit of the dolichol-phosphate mannose (DPM) synthase complex. Plays a role in plant development and physiology, sensitivity to ammonium stress and endoplasmic reticulum stress response. This Arabidopsis thaliana (Mouse-ear cress) protein is Dolichol-phosphate mannosyltransferase subunit 1.